The primary structure comprises 355 residues: UDP-N-acetylglucosamine--N-acetylmuramyl-(pentapeptide) pyrophosphoryl-undecaprenol N-acetylglucosamine transferase (355 aa).

Residues 15 to 17 (TGG), Asn127, Arg163, Ser191, Ile244, 263 to 268 (ALTVSE), and Gln288 contribute to the UDP-N-acetyl-alpha-D-glucosamine site.

The protein belongs to the glycosyltransferase 28 family. MurG subfamily.

It localises to the cell inner membrane. It catalyses the reaction di-trans,octa-cis-undecaprenyl diphospho-N-acetyl-alpha-D-muramoyl-L-alanyl-D-glutamyl-meso-2,6-diaminopimeloyl-D-alanyl-D-alanine + UDP-N-acetyl-alpha-D-glucosamine = di-trans,octa-cis-undecaprenyl diphospho-[N-acetyl-alpha-D-glucosaminyl-(1-&gt;4)]-N-acetyl-alpha-D-muramoyl-L-alanyl-D-glutamyl-meso-2,6-diaminopimeloyl-D-alanyl-D-alanine + UDP + H(+). The protein operates within cell wall biogenesis; peptidoglycan biosynthesis. Cell wall formation. Catalyzes the transfer of a GlcNAc subunit on undecaprenyl-pyrophosphoryl-MurNAc-pentapeptide (lipid intermediate I) to form undecaprenyl-pyrophosphoryl-MurNAc-(pentapeptide)GlcNAc (lipid intermediate II). The chain is UDP-N-acetylglucosamine--N-acetylmuramyl-(pentapeptide) pyrophosphoryl-undecaprenol N-acetylglucosamine transferase from Escherichia coli O157:H7.